The chain runs to 279 residues: Phosphatidylglycerol--prolipoprotein diacylglyceryl transferase (279 aa).

The next 3 membrane-spanning stretches (helical) occupy residues 18–38 (LSVRWYGIIIAVGILLGYFVA), 55–75 (IIFYSALFGFIAARIYFVIFQ), and 89–109 (IWHGGIAIHGGLIGGFIAGVI). A 1,2-diacyl-sn-glycero-3-phospho-(1'-sn-glycerol) is bound at residue R137. The next 2 helical transmembrane spans lie at 203-223 (LGETFFLYLTWYSIGRFFIEG) and 235-255 (IRVAQLVSILLILISISLIVY).

This sequence belongs to the Lgt family.

The protein localises to the cell membrane. It carries out the reaction L-cysteinyl-[prolipoprotein] + a 1,2-diacyl-sn-glycero-3-phospho-(1'-sn-glycerol) = an S-1,2-diacyl-sn-glyceryl-L-cysteinyl-[prolipoprotein] + sn-glycerol 1-phosphate + H(+). It functions in the pathway protein modification; lipoprotein biosynthesis (diacylglyceryl transfer). Functionally, catalyzes the transfer of the diacylglyceryl group from phosphatidylglycerol to the sulfhydryl group of the N-terminal cysteine of a prolipoprotein, the first step in the formation of mature lipoproteins. In Staphylococcus aureus (strain Mu3 / ATCC 700698), this protein is Phosphatidylglycerol--prolipoprotein diacylglyceryl transferase.